We begin with the raw amino-acid sequence, 1236 residues long: ABC transporter B family member 9 (1236 aa).

The ABC transmembrane type-1 1 domain maps to 33-320 (MTVGTIAAAG…TSPSLNAFAA (288 aa)). 6 helical membrane passes run 38–58 (IAAA…GQLI), 80–100 (FIYL…CWMV), 158–178 (QLLC…PLLA), 179–199 (GVLC…SLIM), 257–277 (ISGF…GLAV), and 288–308 (GYNG…GMSL). The ABC transporter 1 domain occupies 355 to 591 (IELKDVYFRY…PEGAYSQLVR (237 aa)). 390–397 (GQSGSGKS) provides a ligand contact to ATP. Asn-542 carries an N-linked (GlcNAc...) asparagine glycan. Residues 593 to 616 (QEGSKEEATESERPETSLDVERSG) form a disordered region. The segment covering 594–616 (EGSKEEATESERPETSLDVERSG) has biased composition (basic and acidic residues). N-linked (GlcNAc...) asparagine glycans are attached at residues Asn-631 and Asn-653. 6 helical membrane passes run 685 to 705 (VLVL…IFGL), 725 to 745 (SHFW…MIPV), 785 to 805 (SLVG…TTGL), 806 to 826 (IIAF…SPFI), 902 to 922 (FSFF…AGLI), and 927 to 947 (ATFG…IGVS). The region spanning 686–958 (LVLGSIAAMV…TSAMAPDSNK (273 aa)) is the ABC transmembrane type-1 2 domain. One can recognise an ABC transporter 2 domain in the interval 993-1230 (IEFRHVSFRY…SGGAYASLVT (238 aa)). 1028–1035 (GESGSGKS) provides a ligand contact to ATP. 2 N-linked (GlcNAc...) asparagine glycosylation sites follow: Asn-1082 and Asn-1181.

Belongs to the ABC transporter superfamily. ABCB family. Multidrug resistance exporter (TC 3.A.1.201) subfamily.

It localises to the membrane. This chain is ABC transporter B family member 9 (ABCB9), found in Arabidopsis thaliana (Mouse-ear cress).